A 384-amino-acid polypeptide reads, in one-letter code: uncharacterized protein (384 aa).

This is an uncharacterized protein from Methanocaldococcus jannaschii (strain ATCC 43067 / DSM 2661 / JAL-1 / JCM 10045 / NBRC 100440) (Methanococcus jannaschii).